The following is a 464-amino-acid chain: ATP-dependent protease ATPase subunit HslU (464 aa).

ATP is bound by residues valine 19, 61 to 66 (GVGKTE), aspartate 278, glutamate 342, and arginine 414.

It belongs to the ClpX chaperone family. HslU subfamily. A double ring-shaped homohexamer of HslV is capped on each side by a ring-shaped HslU homohexamer. The assembly of the HslU/HslV complex is dependent on binding of ATP.

Its subcellular location is the cytoplasm. ATPase subunit of a proteasome-like degradation complex; this subunit has chaperone activity. The binding of ATP and its subsequent hydrolysis by HslU are essential for unfolding of protein substrates subsequently hydrolyzed by HslV. HslU recognizes the N-terminal part of its protein substrates and unfolds these before they are guided to HslV for hydrolysis. The chain is ATP-dependent protease ATPase subunit HslU from Halalkalibacterium halodurans (strain ATCC BAA-125 / DSM 18197 / FERM 7344 / JCM 9153 / C-125) (Bacillus halodurans).